The chain runs to 388 residues: Processive diacylglycerol beta-glucosyltransferase (388 aa).

This sequence belongs to the glycosyltransferase 28 family. UgtP subfamily.

It is found in the cell membrane. The enzyme catalyses a 1,2-diacyl-3-O-(beta-D-glucopyranosyl)-sn-glycerol + UDP-alpha-D-glucose = a 1,2-diacyl-3-O-(beta-D-Glc-(1-&gt;6)-beta-D-Glc)-sn-glycerol + UDP + H(+). The catalysed reaction is a 1,2-diacyl-3-O-(beta-D-Glc-(1-&gt;6)-beta-D-Glc)-sn-glycerol + UDP-alpha-D-glucose = a 1,2-diacyl-3-O-(beta-D-Glc-(1-&gt;6)-beta-D-Glc-(1-&gt;6)-beta-D-Glc)-sn-glycerol + UDP + H(+). It catalyses the reaction a 1,2-diacyl-sn-glycerol + UDP-alpha-D-glucose = a 1,2-diacyl-3-O-(beta-D-glucopyranosyl)-sn-glycerol + UDP + H(+). It participates in glycolipid metabolism; diglucosyl-diacylglycerol biosynthesis. In terms of biological role, processive glucosyltransferase involved in the biosynthesis of both the bilayer- and non-bilayer-forming membrane glucolipids. Is able to successively transfer up to three glucosyl residues to diacylglycerol (DAG), thereby catalyzing the formation of beta-monoglucosyl-DAG (3-O-(beta-D-glucopyranosyl)-1,2-diacyl-sn-glycerol), beta-diglucosyl-DAG (3-O-(beta-D-glucopyranosyl-beta-(1-&gt;6)-D-glucopyranosyl)-1,2-diacyl-sn-glycerol) and beta-triglucosyl-DAG (3-O-(beta-D-glucopyranosyl-beta-(1-&gt;6)-D-glucopyranosyl-beta-(1-&gt;6)-D-glucopyranosyl)-1,2-diacyl-sn-glycerol). Beta-diglucosyl-DAG is the predominant glycolipid found in Bacillales and is also used as a membrane anchor for lipoteichoic acid (LTA). The sequence is that of Processive diacylglycerol beta-glucosyltransferase from Bacillus anthracis (strain A0248).